The chain runs to 707 residues: Protein SGM1 (707 aa).

Residues 1-11 are compositionally biased toward basic and acidic residues; the sequence is MSKKLSLEERL. Positions 1–52 are disordered; that stretch reads MSKKLSLEERLSLATKKGRKKNKRSTSNLSSPSPVVLSNNEQESARTSIDDA. N-acetylserine is present on Ser2. A compositionally biased stretch (low complexity) spans 27–40; it reads SNLSSPSPVVLSNN. Residues 122 to 473 are a coiled coil; sequence VEELVKEISP…KPHQENSNEK (352 aa). Residues Ser151, Ser538, Ser549, Ser568, Ser571, Ser576, and Ser589 each carry the phosphoserine modification. A coiled-coil region spans residues 594–706; it reads SAHLVNKLST…QQMVEMQGKM (113 aa).

It belongs to the SGM1 family. Interacts with YPT6.

The protein resides in the golgi apparatus. Required for normal growth rate on galactose and mannose. The chain is Protein SGM1 (SGM1) from Saccharomyces cerevisiae (strain ATCC 204508 / S288c) (Baker's yeast).